A 72-amino-acid polypeptide reads, in one-letter code: Translation initiation factor IF-1 (72 aa).

The S1-like domain occupies 1 to 72 (MSKDDCIEFE…TKGRIIYRMK (72 aa)).

Belongs to the IF-1 family. As to quaternary structure, component of the 30S ribosomal translation pre-initiation complex which assembles on the 30S ribosome in the order IF-2 and IF-3, IF-1 and N-formylmethionyl-tRNA(fMet); mRNA recruitment can occur at any time during PIC assembly.

The protein localises to the cytoplasm. In terms of biological role, one of the essential components for the initiation of protein synthesis. Stabilizes the binding of IF-2 and IF-3 on the 30S subunit to which N-formylmethionyl-tRNA(fMet) subsequently binds. Helps modulate mRNA selection, yielding the 30S pre-initiation complex (PIC). Upon addition of the 50S ribosomal subunit IF-1, IF-2 and IF-3 are released leaving the mature 70S translation initiation complex. The sequence is that of Translation initiation factor IF-1 from Xylella fastidiosa (strain 9a5c).